The primary structure comprises 335 residues: Ornithine carbamoyltransferase (335 aa).

Carbamoyl phosphate contacts are provided by residues 60-63 (STRT), Gln-87, Arg-111, and 138-141 (HPTQ). L-ornithine contacts are provided by residues Asn-171, Asp-235, and 239 to 240 (SM). Carbamoyl phosphate contacts are provided by residues 277-278 (CL) and Arg-322.

This sequence belongs to the aspartate/ornithine carbamoyltransferase superfamily. OTCase family.

The protein localises to the cytoplasm. It catalyses the reaction carbamoyl phosphate + L-ornithine = L-citrulline + phosphate + H(+). It participates in amino-acid biosynthesis; L-arginine biosynthesis; L-arginine from L-ornithine and carbamoyl phosphate: step 1/3. Reversibly catalyzes the transfer of the carbamoyl group from carbamoyl phosphate (CP) to the N(epsilon) atom of ornithine (ORN) to produce L-citrulline. The protein is Ornithine carbamoyltransferase of Streptomyces avermitilis (strain ATCC 31267 / DSM 46492 / JCM 5070 / NBRC 14893 / NCIMB 12804 / NRRL 8165 / MA-4680).